The primary structure comprises 209 residues: Casparian strip membrane protein 1 (209 aa).

Topologically, residues 1–46 (MSSGANATTIDVPETRAEAKGKAPLIAAPIVATTKATPHPNAGWKK) are cytoplasmic. A helical transmembrane segment spans residues 47 to 67 (GLAIFDFLLRLAAIAATLAAA). Over 68–95 (TTMGTTDETLPFFTQFFQFQASFDDLPA) the chain is Extracellular. The chain crosses the membrane as a helical span at residues 96–116 (FMFFVVATAIASGYLALSLPF). Residues 117 to 137 (SLVSIFRPHAQGIRLLLIISD) lie on the Cytoplasmic side of the membrane. The helical transmembrane segment at 138-158 (TVMLALTTAGAASATAIVYLA) threads the bilayer. Residues 159–183 (HNGDSSANWIAICQQFTDFCQSVSG) are Extracellular-facing. A helical membrane pass occupies residues 184-204 (AVVASFIAVVIFMLLVMMSAL). Residues 205–209 (ALRKH) lie on the Cytoplasmic side of the membrane.

It belongs to the Casparian strip membrane proteins (CASP) family. In terms of assembly, homodimer and heterodimers.

It localises to the cell membrane. In terms of biological role, regulates membrane-cell wall junctions and localized cell wall deposition. Required for establishment of the Casparian strip membrane domain (CSD) and the subsequent formation of Casparian strips, a cell wall modification of the root endodermis that determines an apoplastic barrier between the intraorganismal apoplasm and the extraorganismal apoplasm and prevents lateral diffusion. This chain is Casparian strip membrane protein 1, found in Vitis vinifera (Grape).